We begin with the raw amino-acid sequence, 923 residues long: Isoleucine--tRNA ligase (923 aa).

The 'HIGH' region motif lies at 57–67 (PYANGDIHIGT). Glutamate 561 is a binding site for L-isoleucyl-5'-AMP. The short motif at 602–606 (AMHKS) is the 'KMSKS' region element. Lysine 605 lines the ATP pocket. Positions 895, 898, 915, and 918 each coordinate Zn(2+).

This sequence belongs to the class-I aminoacyl-tRNA synthetase family. IleS type 1 subfamily. As to quaternary structure, monomer. Zn(2+) is required as a cofactor.

The protein localises to the cytoplasm. It catalyses the reaction tRNA(Ile) + L-isoleucine + ATP = L-isoleucyl-tRNA(Ile) + AMP + diphosphate. Catalyzes the attachment of isoleucine to tRNA(Ile). As IleRS can inadvertently accommodate and process structurally similar amino acids such as valine, to avoid such errors it has two additional distinct tRNA(Ile)-dependent editing activities. One activity is designated as 'pretransfer' editing and involves the hydrolysis of activated Val-AMP. The other activity is designated 'posttransfer' editing and involves deacylation of mischarged Val-tRNA(Ile). This chain is Isoleucine--tRNA ligase, found in Brachyspira hyodysenteriae (strain ATCC 49526 / WA1).